Reading from the N-terminus, the 1130-residue chain is DNA-directed RNA polymerase I subunit rpa2 (1130 aa).

The C4-type zinc finger occupies 1070 to 1096 (CKLCGSTLTIYSKKDYSNQTVSECKSC).

This sequence belongs to the RNA polymerase beta chain family. As to quaternary structure, component of the RNA polymerase I (Pol I) complex consisting of 14 subunits.

Its subcellular location is the nucleus. The protein localises to the nucleolus. The enzyme catalyses RNA(n) + a ribonucleoside 5'-triphosphate = RNA(n+1) + diphosphate. Functionally, DNA-dependent RNA polymerase catalyzes the transcription of DNA into RNA using the four ribonucleoside triphosphates as substrates. Second largest core component of RNA polymerase I which synthesizes ribosomal RNA precursors. Proposed to contribute to the polymerase catalytic activity and forms the polymerase active center together with the largest subunit. Pol I is composed of mobile elements and RPA2 is part of the core element with the central large cleft and probably a clamp element that moves to open and close the cleft. This is DNA-directed RNA polymerase I subunit rpa2 (polr1b) from Dictyostelium discoideum (Social amoeba).